The primary structure comprises 619 residues: Guanylate cyclase soluble subunit beta-1 (619 aa).

His105 serves as a coordination point for heme. One can recognise a Guanylate cyclase domain in the interval 421-554 (TILFSGIVGF…NTVNLTSRTE (134 aa)).

The protein belongs to the adenylyl cyclase class-4/guanylyl cyclase family. The active enzyme is formed by a heterodimer of an alpha and a beta subunit. Heterodimer with GUCY1A1. Can also form inactive homodimers in vitro. Heme is required as a cofactor. As to expression, detected in brain cortex and cerebellum (at protein level).

It localises to the cytoplasm. The enzyme catalyses GTP = 3',5'-cyclic GMP + diphosphate. With respect to regulation, activated by nitric oxide in the presence of magnesium or manganese ions. In terms of biological role, mediates responses to nitric oxide (NO) by catalyzing the biosynthesis of the signaling molecule cGMP. The protein is Guanylate cyclase soluble subunit beta-1 of Homo sapiens (Human).